A 518-amino-acid polypeptide reads, in one-letter code: MSPIALLSVSDKTGLIPLAKALVNELGFKIISSGGTAKLIESENLPVTRVADYTGFPEILGGRVKTLNPKIHGGILARRDKQSHLDDLDKQNINPIDLVVVNLYPFVKTISKENVSWEEAIENIDIGGPTMIRAAAKNHQDVLVVTDPSQYSNLIDAYKSKKITPELRKKYSQQAFEHTATYDLTISNWIANQSSSKKVSWLQSLPLKQELRYGENPHQKASWYGEPEKGWSGANQLQGKELSTNNLLDLEAALSTLREFGYKNTISNPSYQKAAVVIKHTNPCGVAIGDSPSSALKRALDGDRVSAFGGIIAINCPVDEAAAKEIENIFIECVVAPYFDETAKEILSKKKNLRLLELKAESVQKADKNHIRSILGGLLIQDLDEPSIDQKKWKSVTELIPTDEEMNDLSFAWKIVKHIRSNAIAVASNQQSLGIGAGQMNRVGSAKLALEAAGTKSKGAVLASDGFFPFDDTVKMASDYGISSIIQPGGSIRDEDSIKACNELGIKMILTGKRHFLH.

The 146-residue stretch at 1–146 folds into the MGS-like domain; it reads MSPIALLSVS…KNHQDVLVVT (146 aa).

Belongs to the PurH family.

It catalyses the reaction (6R)-10-formyltetrahydrofolate + 5-amino-1-(5-phospho-beta-D-ribosyl)imidazole-4-carboxamide = 5-formamido-1-(5-phospho-D-ribosyl)imidazole-4-carboxamide + (6S)-5,6,7,8-tetrahydrofolate. The catalysed reaction is IMP + H2O = 5-formamido-1-(5-phospho-D-ribosyl)imidazole-4-carboxamide. Its pathway is purine metabolism; IMP biosynthesis via de novo pathway; 5-formamido-1-(5-phospho-D-ribosyl)imidazole-4-carboxamide from 5-amino-1-(5-phospho-D-ribosyl)imidazole-4-carboxamide (10-formyl THF route): step 1/1. The protein operates within purine metabolism; IMP biosynthesis via de novo pathway; IMP from 5-formamido-1-(5-phospho-D-ribosyl)imidazole-4-carboxamide: step 1/1. The protein is Bifunctional purine biosynthesis protein PurH of Prochlorococcus marinus (strain NATL1A).